The following is a 156-amino-acid chain: Small ribosomal subunit protein uS7 (156 aa).

It belongs to the universal ribosomal protein uS7 family. Part of the 30S ribosomal subunit. Contacts proteins S9 and S11.

One of the primary rRNA binding proteins, it binds directly to 16S rRNA where it nucleates assembly of the head domain of the 30S subunit. Is located at the subunit interface close to the decoding center, probably blocks exit of the E-site tRNA. In Shouchella clausii (strain KSM-K16) (Alkalihalobacillus clausii), this protein is Small ribosomal subunit protein uS7.